The sequence spans 174 residues: Large ribosomal subunit protein bL12cy (174 aa).

The transit peptide at methionine 1–threonine 45 directs the protein to the chloroplast.

This sequence belongs to the bacterial ribosomal protein bL12 family.

Its subcellular location is the plastid. It is found in the chloroplast. This is Large ribosomal subunit protein bL12cy (RPL12-2) from Secale cereale (Rye).